The primary structure comprises 189 residues: Elongation factor P (189 aa).

The protein belongs to the elongation factor P family.

It is found in the cytoplasm. The protein operates within protein biosynthesis; polypeptide chain elongation. Its function is as follows. Involved in peptide bond synthesis. Stimulates efficient translation and peptide-bond synthesis on native or reconstituted 70S ribosomes in vitro. Probably functions indirectly by altering the affinity of the ribosome for aminoacyl-tRNA, thus increasing their reactivity as acceptors for peptidyl transferase. The protein is Elongation factor P of Pseudomonas entomophila (strain L48).